A 370-amino-acid polypeptide reads, in one-letter code: Phosphate acyltransferase (370 aa).

The disordered stretch occupies residues 349–370; sequence SAGRAGQDAPDEMAAPGRSEKR.

The protein belongs to the PlsX family. As to quaternary structure, homodimer. Probably interacts with PlsY.

The protein resides in the cytoplasm. The enzyme catalyses a fatty acyl-[ACP] + phosphate = an acyl phosphate + holo-[ACP]. It functions in the pathway lipid metabolism; phospholipid metabolism. Functionally, catalyzes the reversible formation of acyl-phosphate (acyl-PO(4)) from acyl-[acyl-carrier-protein] (acyl-ACP). This enzyme utilizes acyl-ACP as fatty acyl donor, but not acyl-CoA. In Cereibacter sphaeroides (strain ATCC 17023 / DSM 158 / JCM 6121 / CCUG 31486 / LMG 2827 / NBRC 12203 / NCIMB 8253 / ATH 2.4.1.) (Rhodobacter sphaeroides), this protein is Phosphate acyltransferase.